The primary structure comprises 194 residues: Dihydrofolate reductase HdrB (194 aa).

The region spanning 18–194 is the DHFR domain; the sequence is RFVLVAAVAD…ADRGAEESDE (177 aa). NADP(+) contacts are provided by residues Ala24 and 30 to 36; that span reads VIGRDGT. Asp44 contributes to the substrate binding site. 62-63 serves as a coordination point for NADP(+); it reads KT. Substrate-binding residues include Arg69 and Arg78. NADP(+) contacts are provided by residues 84-85 and 123-130; these read TT and GGATVYEQ. Residue Thr141 participates in substrate binding. Positions 173–194 are disordered; that stretch reads SFVTYERKQPAAADRGAEESDE.

It belongs to the dihydrofolate reductase family.

The enzyme catalyses (6S)-5,6,7,8-tetrahydrofolate + NADP(+) = 7,8-dihydrofolate + NADPH + H(+). It participates in cofactor biosynthesis; tetrahydrofolate biosynthesis; 5,6,7,8-tetrahydrofolate from 7,8-dihydrofolate: step 1/1. Its activity is regulated as follows. Maximum activity at KCl concentration of 0.5 M and activity decreases with increasing concentration of KCl. In terms of biological role, key enzyme in folate metabolism. Catalyzes an essential reaction for de novo glycine and purine synthesis, and for DNA precursor synthesis. This chain is Dihydrofolate reductase HdrB (hdrB), found in Haloferax volcanii (Halobacterium volcanii).